Reading from the N-terminus, the 92-residue chain is MSTISRDSCPALRAGVRLQHDRARDQWVLLAPERVVELDDIALVVAQRYDGTQSLAEIAQTLATEFDADASEIETDVIELTTTLHQKRLLRL.

Belongs to the PqqD family. Monomer. Interacts with PqqE.

It participates in cofactor biosynthesis; pyrroloquinoline quinone biosynthesis. Its function is as follows. Functions as a PqqA binding protein and presents PqqA to PqqE, in the pyrroloquinoline quinone (PQQ) biosynthetic pathway. This chain is PqqA binding protein, found in Xanthomonas campestris pv. campestris (strain B100).